Reading from the N-terminus, the 547-residue chain is G protein-coupled receptor associated sorting protein 3 (547 aa).

Basic residues predominate over residues 1–10 (MAGTKNKTRA). Disordered stretches follow at residues 1–32 (MAGT…EATG) and 80–102 (TLGK…STCK).

It belongs to the GPRASP family. Homodimer. In terms of tissue distribution, highly expressed in brain. Not expressed in lung or liver. Down-regulated in brain from patients suffering from Alzheimer disease.

It is found in the cytoplasm. Its subcellular location is the nucleus. Functionally, survival and differentiation promoting protein that plays a role in the regulation of neurosynaptogenesis. Induces phosphatase PP2A activity which results in APP dephosphorylation and inhibits BACE1-mediated processing of APP. The polypeptide is G protein-coupled receptor associated sorting protein 3 (Homo sapiens (Human)).